The primary structure comprises 258 residues: Proteasome subunit beta type-1 (258 aa).

It belongs to the peptidase T1B family. In terms of assembly, the 26S proteasome consists of a 20S proteasome core and two 19S regulatory subunits. The 20S proteasome core is composed of 28 subunits that are arranged in four stacked rings, resulting in a barrel-shaped structure. The two end rings are each formed by seven alpha subunits, and the two central rings are each formed by seven beta subunits. The catalytic chamber with the active sites is on the inside of the barrel.

It is found in the cytoplasm. The protein resides in the nucleus. Its function is as follows. Non-catalytic component of the proteasome, a multicatalytic proteinase complex which is characterized by its ability to cleave peptides with Arg, Phe, Tyr, Leu, and Glu adjacent to the leaving group at neutral or slightly basic pH. The proteasome has an ATP-dependent proteolytic activity. The sequence is that of Proteasome subunit beta type-1 (pbs-6) from Caenorhabditis elegans.